A 261-amino-acid chain; its full sequence is Thiamine thiazole synthase (261 aa).

Residues Ser40, 59-60 (ER), Gly67, Val133, and 159-161 (HID) each bind NAD(+). The Fe cation site is built by Asp161 and His176. Positions 179 and 226 each coordinate NAD(+). Arg236 contacts glycine.

It belongs to the THI4 family. As to quaternary structure, homooctamer; tetramer of dimers. Fe(2+) serves as cofactor.

It catalyses the reaction hydrogen sulfide + glycine + NAD(+) = ADP-5-ethyl-4-methylthiazole-2-carboxylate + nicotinamide + 3 H2O + H(+). It participates in cofactor biosynthesis; thiamine diphosphate biosynthesis. Its function is as follows. Involved in the biosynthesis of the thiazole moiety of thiamine. Catalyzes the conversion of NAD and glycine to adenosine diphosphate 5-(2-hydroxyethyl)-4-methylthiazole-2-carboxylate (ADT), an adenylated thiazole intermediate, using free sulfide as a source of sulfur. The polypeptide is Thiamine thiazole synthase (Methanococcus maripaludis (strain C5 / ATCC BAA-1333)).